The sequence spans 101 residues: Apolipoprotein C-II (101 aa).

The signal sequence occupies residues 1-22; that stretch reads MGTRFLLALFLVLLVLGLEVQA. A lipid binding region spans residues 66–74; that stretch reads AVDERIRDM. The interval 78-101 is lipoprotein lipase cofactor; that stretch reads STAAVTTYAGIFTDQLFSMLKGEQ.

This sequence belongs to the apolipoprotein C2 family. In terms of processing, proapolipoprotein C-II is synthesized as a sialic acid containing glycoprotein which is subsequently desialylated prior to its proteolytic processing. Proapolipoprotein C-II, the major form found in plasma undergoes proteolytic cleavage of its N-terminal hexapeptide to generate apolipoprotein C-II, which occurs as the minor form in plasma.

Its subcellular location is the secreted. Functionally, component of chylomicrons, very low-density lipoproteins (VLDL), low-density lipoproteins (LDL), and high-density lipoproteins (HDL) in plasma. Plays an important role in lipoprotein metabolism as an activator of lipoprotein lipase. Both proapolipoprotein C-II and apolipoprotein C-II can activate lipoprotein lipase. This chain is Apolipoprotein C-II (APOC2), found in Tupaia glis (Common tree shrew).